A 387-amino-acid polypeptide reads, in one-letter code: EARP-interacting protein homolog (387 aa).

5 WD repeats span residues Thr132–Val172, Lys182–Cys222, Ala226–Lys266, Glu270–Phe310, and Glu345–Ile385.

The protein belongs to the WD repeat EIPR1 family.

This chain is EARP-interacting protein homolog, found in Gekko japonicus (Schlegel's Japanese gecko).